The primary structure comprises 369 residues: Phosphoribosyl pyrophosphate synthase-associated protein 2 (369 aa).

Met1 is modified (N-acetylmethionine). Phosphothreonine is present on Thr5. A phosphoserine mark is found at Ser219, Ser227, and Ser233.

It belongs to the ribose-phosphate pyrophosphokinase family. Binds to PRPS1 and PRPS2.

In terms of biological role, seems to play a negative regulatory role in 5-phosphoribose 1-diphosphate synthesis. The chain is Phosphoribosyl pyrophosphate synthase-associated protein 2 (PRPSAP2) from Pongo abelii (Sumatran orangutan).